Here is a 390-residue protein sequence, read N- to C-terminus: Galactokinase (390 aa).

Substrate is bound at residue 33–36 (EHTD). ATP is bound by residues serine 67 and 124 to 130 (GAGLSSS). Mg(2+) is bound by residues serine 130 and glutamate 162. Aspartate 174 functions as the Proton acceptor in the catalytic mechanism. Residue tyrosine 224 participates in substrate binding.

Belongs to the GHMP kinase family. GalK subfamily.

It localises to the cytoplasm. It catalyses the reaction alpha-D-galactose + ATP = alpha-D-galactose 1-phosphate + ADP + H(+). It functions in the pathway carbohydrate metabolism; galactose metabolism. In terms of biological role, catalyzes the transfer of the gamma-phosphate of ATP to D-galactose to form alpha-D-galactose-1-phosphate (Gal-1-P). This chain is Galactokinase, found in Exiguobacterium sibiricum (strain DSM 17290 / CCUG 55495 / CIP 109462 / JCM 13490 / 255-15).